We begin with the raw amino-acid sequence, 122 residues long: Large ribosomal subunit protein uL14 (122 aa).

It belongs to the universal ribosomal protein uL14 family. In terms of assembly, part of the 50S ribosomal subunit. Forms a cluster with proteins L3 and L19. In the 70S ribosome, L14 and L19 interact and together make contacts with the 16S rRNA in bridges B5 and B8.

Functionally, binds to 23S rRNA. Forms part of two intersubunit bridges in the 70S ribosome. This Kosmotoga olearia (strain ATCC BAA-1733 / DSM 21960 / TBF 19.5.1) protein is Large ribosomal subunit protein uL14.